Reading from the N-terminus, the 587-residue chain is MLWKRTCTRLIKPIAQPRGRLVRRSCYRYASTGTGSTDSSSQWLKYSVIASSATLFGYLFAKNLYSRETKEDLIEKLEMVKKIDPVNSTLKLSSLDSPDYLHDPVKIDKVVEDLKQVLGNKPENYSDAKSDLDAHSDTYFNTHHPSPEQRPRIILFPHTTEEVSKILKICHDNNMPVVPFSGGTSLEGHFLPTRIGDTITVDLSKFMNNVVKFDKLDLDITVQAGLPWEDLNDYLSDHGLMFGCDPGPGAQIGGCIANSCSGTNAYRYGTMKENIINMTIVLPDGTIVKTKKRPRKSSAGYNLNGLFVGSEGTLGIVTEATVKCHVKPKAETVAVVSFDTIKDAAACASNLTQSGIHLNAMELLDENMMKLINASESTDRCDWVEKPTMFFKIGGRSPNIVNALVDEVKAVAQLNHCNSFQFAKDDDEKLELWEARKVALWSVLDADKSKDKSAKIWTTDVAVPVSQFDKVIHETKKDMQASKLINAIVGHAGDGNFHAFIVYRTPEEHETCSQLVDRMVKRALNAEGTCTGEHGVGIGKREYLLEELGEAPVDLMRKIKLAIDPKRIMNPDKIFKTDPNEPANDYR.

Positions 146–327 (SPEQRPRIIL…TEATVKCHVK (182 aa)) constitute an FAD-binding PCMH-type domain.

This sequence belongs to the FAD-binding oxidoreductase/transferase type 4 family. The cofactor is FAD.

It localises to the mitochondrion inner membrane. It catalyses the reaction (R)-lactate + 2 Fe(III)-[cytochrome c] = 2 Fe(II)-[cytochrome c] + pyruvate + 2 H(+). In terms of biological role, catalyzes the stereospecific oxidation of D-lactate to pyruvate. The protein is D-lactate dehydrogenase [cytochrome] 1, mitochondrial of Saccharomyces cerevisiae (strain ATCC 204508 / S288c) (Baker's yeast).